Reading from the N-terminus, the 391-residue chain is MATLTETISKADKHDEKLTDFQYSKKIFNGVHEVEDDKQRTDFTTVRFGDVEKKFAVPKDYKYKNVLPTFPNAVYNLTGELAFEDKGLLADPKFSNLLKDVTKVEHLARDLGTVLYGIQLSKLNDAQKNELARYIAERGVVYFPDQEQTLEEFQELGQYYGHSHKHGSNSRPFEDKFAEFQVVYSDRFSPYDQHAKNNSLRYWHSDVSFEKQPSAQTFFKALTVPEQGGDTLFISGYAAYEALSTPLKKYLEGLTVVHSGKEQSEYHRRSGQHVRLDGDTNAHPIVRTHPVTGWKSLFISPGFTRYIPGIPRGESDAILDYLYQHIANLSQSTVRIKWTSNGVAAWDNRIVIHRATYDHLPQTRHLVRIAAQGEVPFFDANSHERSEDLRE.

Fe cation is bound by residues H204 and D206. T231 and W338 together coordinate 2-oxoglutarate. H353 is a Fe cation binding site. 2-oxoglutarate contacts are provided by R364 and R368.

It belongs to the TfdA dioxygenase family. Requires Fe(2+) as cofactor.

The protein operates within organosulfur degradation; alkanesulfonate degradation. Its function is as follows. Acts as an alpha-ketoglutarate-dependent dioxygenase active on sulfonates. The sequence is that of Putative alpha-ketoglutarate-dependent sulfonate dioxygenase from Schizosaccharomyces pombe (strain 972 / ATCC 24843) (Fission yeast).